A 533-amino-acid polypeptide reads, in one-letter code: Zinc finger protein 692 (533 aa).

2 disordered regions span residues 124-251 (SLIP…PATL) and 290-310 (TESL…TCDE). The segment covering 149–178 (EARRKQEAEGLECEHRERTQETRLSRRVEP) has biased composition (basic and acidic residues). Over residues 190–208 (QVVEEEEEEEEEEEEEELL) the composition is skewed to acidic residues. Ser-233 carries the phosphoserine modification. Positions 290-305 (TESLDSPGSQAQSAPN) are enriched in polar residues. 5 C2H2-type zinc fingers span residues 329 to 354 (MPCD…KYQH), 360 to 384 (FCCP…VKLH), 390 to 412 (YICE…RRIH), 418 to 440 (LQCE…RRKH), and 449 to 472 (FPCE…SKSH). Ser-471 carries the post-translational modification Phosphoserine. Residues 478-533 (VQESPGSLGSSPSISAPEPLQSPEGTSFSTSYDSNPAPSTSISSPGVPAPRNTEKS) form a disordered region. A compositionally biased stretch (low complexity) spans 481-492 (SPGSLGSSPSIS). Polar residues predominate over residues 500–521 (PEGTSFSTSYDSNPAPSTSISS).

Belongs to the krueppel C2H2-type zinc-finger protein family. Phosphorylation at Ser-471 results in loss of DNA-binding activity.

It localises to the nucleus. May act as an transcriptional repressor for PCK1 gene expression, in turns may participate in the hepatic gluconeogenesis regulation through the activated AMPK signaling pathway. This is Zinc finger protein 692 from Rattus norvegicus (Rat).